Reading from the N-terminus, the 340-residue chain is Ketol-acid reductoisomerase (NADP(+)) (340 aa).

The 183-residue stretch at 1-183 (MAITVYYDKD…GGGRTGIIET (183 aa)) folds into the KARI N-terminal Rossmann domain. Residues 26-29 (FGSQ), Arg-49, Ser-52, Ser-54, and 84-87 (DEIQ) contribute to the NADP(+) site. His-109 is a catalytic residue. An NADP(+)-binding site is contributed by Gly-135. Positions 184 to 329 (TFKAETETDL…RNLRAMMPWI (146 aa)) constitute a KARI C-terminal knotted domain. Mg(2+) is bound by residues Asp-192, Glu-196, Glu-228, and Glu-232. Residue Ser-253 participates in substrate binding.

Belongs to the ketol-acid reductoisomerase family. Requires Mg(2+) as cofactor.

It carries out the reaction (2R)-2,3-dihydroxy-3-methylbutanoate + NADP(+) = (2S)-2-acetolactate + NADPH + H(+). It catalyses the reaction (2R,3R)-2,3-dihydroxy-3-methylpentanoate + NADP(+) = (S)-2-ethyl-2-hydroxy-3-oxobutanoate + NADPH + H(+). Its pathway is amino-acid biosynthesis; L-isoleucine biosynthesis; L-isoleucine from 2-oxobutanoate: step 2/4. It participates in amino-acid biosynthesis; L-valine biosynthesis; L-valine from pyruvate: step 2/4. Involved in the biosynthesis of branched-chain amino acids (BCAA). Catalyzes an alkyl-migration followed by a ketol-acid reduction of (S)-2-acetolactate (S2AL) to yield (R)-2,3-dihydroxy-isovalerate. In the isomerase reaction, S2AL is rearranged via a Mg-dependent methyl migration to produce 3-hydroxy-3-methyl-2-ketobutyrate (HMKB). In the reductase reaction, this 2-ketoacid undergoes a metal-dependent reduction by NADPH to yield (R)-2,3-dihydroxy-isovalerate. This chain is Ketol-acid reductoisomerase (NADP(+)), found in Campylobacter jejuni subsp. jejuni serotype O:6 (strain 81116 / NCTC 11828).